Reading from the N-terminus, the 115-residue chain is MSDLDIQIPTAFDPFSEANAGDSGAAAGSKDYVHVRIQQRNGRKSLTTVQGLKKEFSYNKILKDLKKEFCCNGTVVQDPELGQVIQLQGDQRKNVSNFLVQAGIVKKEHIKIHGF.

Belongs to the SUI1 family.

Its function is as follows. Probably involved in translation. This chain is Protein translation factor SUI1 homolog, found in Sporobolus stapfianus (Ressurection grass).